Consider the following 213-residue polypeptide: Thymidylate kinase (213 aa).

ATP is bound at residue 10–17; the sequence is GPDGAGKT.

The protein belongs to the thymidylate kinase family.

The enzyme catalyses dTMP + ATP = dTDP + ADP. Functionally, phosphorylation of dTMP to form dTDP in both de novo and salvage pathways of dTTP synthesis. The chain is Thymidylate kinase from Limosilactobacillus reuteri (strain DSM 20016) (Lactobacillus reuteri).